Here is a 135-residue protein sequence, read N- to C-terminus: uncharacterized protein (135 aa).

This is an uncharacterized protein from Archaeoglobus fulgidus (strain ATCC 49558 / DSM 4304 / JCM 9628 / NBRC 100126 / VC-16).